The primary structure comprises 74 residues: ATP synthase subunit c (74 aa).

Transmembrane regions (helical) follow at residues 5–25 (LAHI…IGVG) and 49–69 (LFIG…VALL).

It belongs to the ATPase C chain family. As to quaternary structure, F-type ATPases have 2 components, F(1) - the catalytic core - and F(0) - the membrane proton channel. F(1) has five subunits: alpha(3), beta(3), gamma(1), delta(1), epsilon(1). F(0) has four main subunits: a(1), b(1), b'(1) and c(10-14). The alpha and beta chains form an alternating ring which encloses part of the gamma chain. F(1) is attached to F(0) by a central stalk formed by the gamma and epsilon chains, while a peripheral stalk is formed by the delta, b and b' chains.

It is found in the cell inner membrane. Functionally, f(1)F(0) ATP synthase produces ATP from ADP in the presence of a proton or sodium gradient. F-type ATPases consist of two structural domains, F(1) containing the extramembraneous catalytic core and F(0) containing the membrane proton channel, linked together by a central stalk and a peripheral stalk. During catalysis, ATP synthesis in the catalytic domain of F(1) is coupled via a rotary mechanism of the central stalk subunits to proton translocation. In terms of biological role, key component of the F(0) channel; it plays a direct role in translocation across the membrane. A homomeric c-ring of between 10-14 subunits forms the central stalk rotor element with the F(1) delta and epsilon subunits. The chain is ATP synthase subunit c from Roseobacter denitrificans (strain ATCC 33942 / OCh 114) (Erythrobacter sp. (strain OCh 114)).